We begin with the raw amino-acid sequence, 319 residues long: ADP-L-glycero-D-manno-heptose-6-epimerase (319 aa).

Residues 10–11 (FI), 31–32 (DD), lysine 38, lysine 53, and 79–83 (EGACS) each bind NADP(+). Residue tyrosine 144 is the Proton acceptor of the active site. Residue lysine 148 coordinates NADP(+). Residue asparagine 173 participates in substrate binding. NADP(+)-binding residues include valine 174 and lysine 182. Lysine 182 (proton acceptor) is an active-site residue. Substrate is bound by residues serine 184, histidine 191, 205–208 (FEGC), arginine 218, and tyrosine 282.

The protein belongs to the NAD(P)-dependent epimerase/dehydratase family. HldD subfamily. As to quaternary structure, homopentamer. NADP(+) is required as a cofactor.

The catalysed reaction is ADP-D-glycero-beta-D-manno-heptose = ADP-L-glycero-beta-D-manno-heptose. The protein operates within nucleotide-sugar biosynthesis; ADP-L-glycero-beta-D-manno-heptose biosynthesis; ADP-L-glycero-beta-D-manno-heptose from D-glycero-beta-D-manno-heptose 7-phosphate: step 4/4. Catalyzes the interconversion between ADP-D-glycero-beta-D-manno-heptose and ADP-L-glycero-beta-D-manno-heptose via an epimerization at carbon 6 of the heptose. This Aeromonas salmonicida (strain A449) protein is ADP-L-glycero-D-manno-heptose-6-epimerase.